Reading from the N-terminus, the 155-residue chain is Small ribosomal subunit protein uS7 (155 aa).

Belongs to the universal ribosomal protein uS7 family. Part of the 30S ribosomal subunit. Contacts proteins S9 and S11.

One of the primary rRNA binding proteins, it binds directly to 16S rRNA where it nucleates assembly of the head domain of the 30S subunit. Is located at the subunit interface close to the decoding center, probably blocks exit of the E-site tRNA. This is Small ribosomal subunit protein uS7 from Sulfurimonas denitrificans (strain ATCC 33889 / DSM 1251) (Thiomicrospira denitrificans (strain ATCC 33889 / DSM 1251)).